A 339-amino-acid chain; its full sequence is Dihydroorotate dehydrogenase (quinone) (339 aa).

FMN is bound by residues 62 to 66 (AGMDK) and Thr86. Lys66 is a binding site for substrate. 111-115 (NRMGF) is a binding site for substrate. Residues Asn139 and Asn172 each coordinate FMN. Asn172 is a substrate binding site. The active-site Nucleophile is Ser175. Substrate is bound at residue Asn177. The FMN site is built by Lys217 and Thr245. 246 to 247 (NT) lines the substrate pocket. FMN-binding positions include Gly268, Gly297, and 318–319 (YS).

The protein belongs to the dihydroorotate dehydrogenase family. Type 2 subfamily. Monomer. FMN is required as a cofactor.

It is found in the cell membrane. The catalysed reaction is (S)-dihydroorotate + a quinone = orotate + a quinol. It participates in pyrimidine metabolism; UMP biosynthesis via de novo pathway; orotate from (S)-dihydroorotate (quinone route): step 1/1. Functionally, catalyzes the conversion of dihydroorotate to orotate with quinone as electron acceptor. This is Dihydroorotate dehydrogenase (quinone) from Shewanella baltica (strain OS185).